The sequence spans 100 residues: MAKKSMVEREKKRARLRQKYEAKRTELKEQFRTAEDFEEKLAIHQKLQELPRNSAPSRHRNRCLTTGRPRGYYRDFGLSRNVLREWAHQGLLPGVVKSSW.

It belongs to the universal ribosomal protein uS14 family. As to quaternary structure, part of the 30S ribosomal subunit. Contacts proteins S3 and S10.

Binds 16S rRNA, required for the assembly of 30S particles and may also be responsible for determining the conformation of the 16S rRNA at the A site. The sequence is that of Small ribosomal subunit protein uS14 from Microcystis aeruginosa (strain NIES-843 / IAM M-2473).